The chain runs to 219 residues: Large ribosomal subunit protein uL3 (219 aa).

An N5-methylglutamine modification is found at Gln151.

This sequence belongs to the universal ribosomal protein uL3 family. Part of the 50S ribosomal subunit. Forms a cluster with proteins L14 and L19. In terms of processing, methylated by PrmB.

Functionally, one of the primary rRNA binding proteins, it binds directly near the 3'-end of the 23S rRNA, where it nucleates assembly of the 50S subunit. This Blochmanniella floridana protein is Large ribosomal subunit protein uL3.